The sequence spans 162 residues: Protein-export protein SecB 2 (162 aa).

Belongs to the SecB family. In terms of assembly, homotetramer, a dimer of dimers. One homotetramer interacts with 1 SecA dimer.

Its subcellular location is the cytoplasm. In terms of biological role, one of the proteins required for the normal export of preproteins out of the cell cytoplasm. It is a molecular chaperone that binds to a subset of precursor proteins, maintaining them in a translocation-competent state. It also specifically binds to its receptor SecA. The chain is Protein-export protein SecB 2 from Polaromonas naphthalenivorans (strain CJ2).